The sequence spans 184 residues: Ribosome-recycling factor (184 aa).

It belongs to the RRF family.

It localises to the cytoplasm. Its function is as follows. Responsible for the release of ribosomes from messenger RNA at the termination of protein biosynthesis. May increase the efficiency of translation by recycling ribosomes from one round of translation to another. The sequence is that of Ribosome-recycling factor from Agathobacter rectalis (strain ATCC 33656 / DSM 3377 / JCM 17463 / KCTC 5835 / VPI 0990) (Eubacterium rectale).